The primary structure comprises 263 residues: (2Z,6E)-farnesyl diphosphate synthase (263 aa).

Aspartate 40 is a catalytic residue. Aspartate 40 contributes to the Mg(2+) binding site. Residues 41 to 44, tryptophan 45, and 86 to 88 contribute to the substrate site; these read GNRR and STE. Asparagine 89 serves as the catalytic Proton acceptor. Residues arginine 92, arginine 212, and 218–220 each bind substrate; that span reads RLS. Glutamate 231 contacts Mg(2+).

Belongs to the UPP synthase family. Z-FPP synthase subfamily. Homodimer. The cofactor is Mg(2+).

The protein localises to the cell membrane. The enzyme catalyses isopentenyl diphosphate + (2E)-geranyl diphosphate = (2Z,6E)-farnesyl diphosphate + diphosphate. In terms of biological role, catalyzes the condensation of only one isopentenyl pyrophosphate (IPP) unit in the cis configuration to E-geranyl diphosphate (E-GPP) generating the 15 carbon product (2Z,6E)-farnesyl diphosphate (Z-FPP or EZ-FPP). Z-FPP is the precursor of decaprenyl diphosphate, which has a central role in the biosynthesis of the mycobacterial cell wall. In Mycolicibacterium smegmatis (strain ATCC 700084 / mc(2)155) (Mycobacterium smegmatis), this protein is (2Z,6E)-farnesyl diphosphate synthase (uppS).